We begin with the raw amino-acid sequence, 522 residues long: Protein GDS1 (522 aa).

Disordered stretches follow at residues 56–88 (ALDD…PKKD), 222–268 (QQLE…SSNS), 300–391 (LSPS…SHNA), and 433–489 (STQT…SRNE). The span at 62 to 73 (LAGSSFSSSQEI) shows a compositional bias: polar residues. Residues 74–88 (KATKPKKDFGAPKKD) show a composition bias toward basic and acidic residues. Composition is skewed to polar residues over residues 222–236 (QQLE…FNSN), 244–260 (SSNQ…SMTD), 300–314 (LSPS…LLTP), and 355–366 (SQSLSVLSTPKK). A compositionally biased stretch (low complexity) spans 368-378 (SSASLSTFASS). Over residues 379-391 (KNISPDSSLSHNA) the composition is skewed to polar residues. The span at 439-467 (ESSSESSQYNSSSSSPVNSAAASSAESLS) shows a compositional bias: low complexity. The segment covering 468 to 489 (DINSSQDNGRESNPSSQESRNE) has biased composition (polar residues).

In terms of biological role, involved in nuclear control of mitochondria. The polypeptide is Protein GDS1 (GDS1) (Saccharomyces cerevisiae (strain ATCC 204508 / S288c) (Baker's yeast)).